The primary structure comprises 261 residues: Lipase LipV (261 aa).

The Nucleophile role is filled by S87. Residues D217 and H240 each act as charge relay system in the active site.

Belongs to the AB hydrolase superfamily.

The enzyme catalyses a carboxylic ester + H2O = an alcohol + a carboxylate + H(+). It catalyses the reaction a tetradecanoate ester + H2O = an aliphatic alcohol + tetradecanoate + H(+). It carries out the reaction decanoate ester + H2O = decanoate + an aliphatic alcohol + H(+). The catalysed reaction is an octanoate ester + H2O = an aliphatic alcohol + octanoate + H(+). The enzyme catalyses a dodecanoate ester + H2O = an aliphatic alcohol + dodecanoate + H(+). It catalyses the reaction a butanoate ester + H2O = an aliphatic alcohol + butanoate + H(+). It carries out the reaction hexadecanoate ester + H2O = an aliphatic alcohol + hexadecanoate + H(+). The catalysed reaction is octadecanoate ester + H2O = an aliphatic alcohol + octadecanoate + H(+). Its activity is regulated as follows. Is inhibited by tetrahydrolipstatin, a specific lipase inhibitor and RHC 80267, a diacylglycerol lipase inhibitor, but not by phenylglyoxal and iodoacetate. Functionally, lipase that displays broad substrate specificity and preferentially hydrolyzes p-nitrophenyl myristate in vitro. Also shows significant activity with pNP-butyrate (68%), pNP-octanoate (82%), pNP-decanoate (90%), and pNP-laurate (74%). Is probably involved in lipid catabolism. Is active at low pH, and might play some important role in mycobacterial biology in macrophages where the bacteria encounters acidic stress. In Mycobacterium tuberculosis (strain ATCC 25618 / H37Rv), this protein is Lipase LipV.